Consider the following 60-residue polypeptide: Small ribosomal subunit protein bS21 (60 aa).

The segment at 39-60 (ETPQEKRKRKAVARRRQRTRRR) is disordered. Positions 44-60 (KRKRKAVARRRQRTRRR) are enriched in basic residues.

The protein belongs to the bacterial ribosomal protein bS21 family.

The chain is Small ribosomal subunit protein bS21 from Microcystis aeruginosa (strain NIES-843 / IAM M-2473).